Consider the following 451-residue polypeptide: Bifunctional protein GlmU (451 aa).

The interval 1–229 (MERFAVILAA…FDETIGVNDR (229 aa)) is pyrophosphorylase. UDP-N-acetyl-alpha-D-glucosamine is bound by residues 8–11 (LAAG), Lys-22, Gln-72, and 77–78 (GT). Asp-102 is a binding site for Mg(2+). Gly-139, Glu-154, Asn-169, and Asn-227 together coordinate UDP-N-acetyl-alpha-D-glucosamine. Position 227 (Asn-227) interacts with Mg(2+). Positions 230 to 250 (VALSQAEAIMRKRTNERLMRE) are linker. Positions 251 to 451 (GVTFMDPAST…QTNKEGYTKR (201 aa)) are N-acetyltransferase. 2 residues coordinate UDP-N-acetyl-alpha-D-glucosamine: Arg-332 and Lys-350. Catalysis depends on His-362, which acts as the Proton acceptor. 2 residues coordinate UDP-N-acetyl-alpha-D-glucosamine: Tyr-365 and Asn-376. Residues 385–386 (NY), Ala-422, and Arg-439 contribute to the acetyl-CoA site.

In the N-terminal section; belongs to the N-acetylglucosamine-1-phosphate uridyltransferase family. The protein in the C-terminal section; belongs to the transferase hexapeptide repeat family. In terms of assembly, homotrimer. Mg(2+) is required as a cofactor.

It is found in the cytoplasm. It catalyses the reaction alpha-D-glucosamine 1-phosphate + acetyl-CoA = N-acetyl-alpha-D-glucosamine 1-phosphate + CoA + H(+). The enzyme catalyses N-acetyl-alpha-D-glucosamine 1-phosphate + UTP + H(+) = UDP-N-acetyl-alpha-D-glucosamine + diphosphate. The protein operates within nucleotide-sugar biosynthesis; UDP-N-acetyl-alpha-D-glucosamine biosynthesis; N-acetyl-alpha-D-glucosamine 1-phosphate from alpha-D-glucosamine 6-phosphate (route II): step 2/2. It participates in nucleotide-sugar biosynthesis; UDP-N-acetyl-alpha-D-glucosamine biosynthesis; UDP-N-acetyl-alpha-D-glucosamine from N-acetyl-alpha-D-glucosamine 1-phosphate: step 1/1. It functions in the pathway bacterial outer membrane biogenesis; LPS lipid A biosynthesis. Functionally, catalyzes the last two sequential reactions in the de novo biosynthetic pathway for UDP-N-acetylglucosamine (UDP-GlcNAc). The C-terminal domain catalyzes the transfer of acetyl group from acetyl coenzyme A to glucosamine-1-phosphate (GlcN-1-P) to produce N-acetylglucosamine-1-phosphate (GlcNAc-1-P), which is converted into UDP-GlcNAc by the transfer of uridine 5-monophosphate (from uridine 5-triphosphate), a reaction catalyzed by the N-terminal domain. This is Bifunctional protein GlmU from Exiguobacterium sp. (strain ATCC BAA-1283 / AT1b).